The primary structure comprises 662 residues: UvrABC system protein B (662 aa).

The 158-residue stretch at lysine 25–arginine 182 folds into the Helicase ATP-binding domain. An ATP-binding site is contributed by glycine 38–threonine 45. A Beta-hairpin motif is present at residues tyrosine 91–isoleucine 114. The 167-residue stretch at glutamine 429–isoleucine 595 folds into the Helicase C-terminal domain. The 36-residue stretch at aspartate 622–aspartate 657 folds into the UVR domain.

This sequence belongs to the UvrB family. In terms of assembly, forms a heterotetramer with UvrA during the search for lesions. Interacts with UvrC in an incision complex.

It localises to the cytoplasm. Functionally, the UvrABC repair system catalyzes the recognition and processing of DNA lesions. A damage recognition complex composed of 2 UvrA and 2 UvrB subunits scans DNA for abnormalities. Upon binding of the UvrA(2)B(2) complex to a putative damaged site, the DNA wraps around one UvrB monomer. DNA wrap is dependent on ATP binding by UvrB and probably causes local melting of the DNA helix, facilitating insertion of UvrB beta-hairpin between the DNA strands. Then UvrB probes one DNA strand for the presence of a lesion. If a lesion is found the UvrA subunits dissociate and the UvrB-DNA preincision complex is formed. This complex is subsequently bound by UvrC and the second UvrB is released. If no lesion is found, the DNA wraps around the other UvrB subunit that will check the other stand for damage. The sequence is that of UvrABC system protein B from Clostridium botulinum (strain 657 / Type Ba4).